The sequence spans 212 residues: Thymidylate kinase (212 aa).

Gly10–Thr17 is a binding site for ATP.

It belongs to the thymidylate kinase family.

The enzyme catalyses dTMP + ATP = dTDP + ADP. Phosphorylation of dTMP to form dTDP in both de novo and salvage pathways of dTTP synthesis. The protein is Thymidylate kinase of Bacillus pumilus (strain SAFR-032).